Consider the following 588-residue polypeptide: Aspartate--tRNA ligase (588 aa).

E172 serves as a coordination point for L-aspartate. The interval 196 to 199 is aspartate; sequence QLFK. R218 contributes to the L-aspartate binding site. Residues 218–220 and Q227 contribute to the ATP site; that span reads RDE. L-aspartate is bound at residue H449. E483 is a binding site for ATP. R490 is an L-aspartate binding site. 535–538 provides a ligand contact to ATP; the sequence is GLDR.

Belongs to the class-II aminoacyl-tRNA synthetase family. Type 1 subfamily. Homodimer.

It localises to the cytoplasm. The catalysed reaction is tRNA(Asp) + L-aspartate + ATP = L-aspartyl-tRNA(Asp) + AMP + diphosphate. Its function is as follows. Catalyzes the attachment of L-aspartate to tRNA(Asp) in a two-step reaction: L-aspartate is first activated by ATP to form Asp-AMP and then transferred to the acceptor end of tRNA(Asp). The polypeptide is Aspartate--tRNA ligase (Haemophilus influenzae (strain ATCC 51907 / DSM 11121 / KW20 / Rd)).